An 85-amino-acid polypeptide reads, in one-letter code: UPF0213 protein NP_0776A (85 aa).

A GIY-YIG domain is found at A3 to R78. Basic and acidic residues predominate over residues K58–S70. Residues K58–G85 are disordered.

This sequence belongs to the UPF0213 family.

In Natronomonas pharaonis (strain ATCC 35678 / DSM 2160 / CIP 103997 / JCM 8858 / NBRC 14720 / NCIMB 2260 / Gabara) (Halobacterium pharaonis), this protein is UPF0213 protein NP_0776A.